The sequence spans 167 residues: MSDTPETGKPAAGTKPAARTEAKAPPKSARRRSRELALQGLYQWLLNRNDIGAIQAHLHDAQGFNKADSEHFDALLNGAVREEARLTAAFEPFLDRKVEELSPVERAALLVGSYELVHCVDIPYKVVINEAVELTKTFGGVEGYKYVNGVLDKLAAQVRSAEVAARR.

The disordered stretch occupies residues 1–32 (MSDTPETGKPAAGTKPAARTEAKAPPKSARRR).

This sequence belongs to the NusB family.

In terms of biological role, involved in transcription antitermination. Required for transcription of ribosomal RNA (rRNA) genes. Binds specifically to the boxA antiterminator sequence of the ribosomal RNA (rrn) operons. This Cupriavidus pinatubonensis (strain JMP 134 / LMG 1197) (Cupriavidus necator (strain JMP 134)) protein is Transcription antitermination protein NusB.